The sequence spans 283 residues: Pantothenate synthetase (283 aa).

Residue 34–41 participates in ATP binding; sequence MGALHDGH. H41 serves as the catalytic Proton donor. Q65 is a binding site for (R)-pantoate. Q65 contacts beta-alanine. 152–155 contributes to the ATP binding site; it reads GSKD. Residue Q158 coordinates (R)-pantoate. ATP contacts are provided by residues I181 and 189-192; that span reads MSSR.

This sequence belongs to the pantothenate synthetase family. In terms of assembly, homodimer.

It localises to the cytoplasm. The enzyme catalyses (R)-pantoate + beta-alanine + ATP = (R)-pantothenate + AMP + diphosphate + H(+). The protein operates within cofactor biosynthesis; (R)-pantothenate biosynthesis; (R)-pantothenate from (R)-pantoate and beta-alanine: step 1/1. In terms of biological role, catalyzes the condensation of pantoate with beta-alanine in an ATP-dependent reaction via a pantoyl-adenylate intermediate. This is Pantothenate synthetase from Rhodopseudomonas palustris (strain HaA2).